The chain runs to 942 residues: Inter alpha-trypsin inhibitor, heavy chain 4 (942 aa).

A signal peptide spans 1–28 (MKSPAPAHMWNLVLFLPSLLAVLPTTTA). Positions 29–148 (EKNGIDIYSL…KITFELIYQE (120 aa)) constitute a VIT domain. N81 carries an N-linked (GlcNAc...) asparagine glycan. One can recognise a VWFA domain in the interval 274-457 (NVIFVIDKSG…LQLQDFYHEV (184 aa)). N-linked (GlcNAc...) asparagine glycans are attached at residues N517 and N577. The stretch at 552–586 (TIQQQLEQRISASGAELEALEAQVLNLSLKYNFVT) forms a coiled coil. Disordered regions lie at residues 658 to 698 (RQYI…SDFS) and 726 to 745 (EKSKESTIPEESPNPDHPQV). A compositionally biased stretch (pro residues) spans 663-690 (PGFPGPPGPPGFPAPPGPPGFPAPPGPP). T732 carries O-linked (GalNAc...) threonine glycosylation. The cysteines at positions 761 and 937 are disulfide-linked. A glycan (N-linked (GlcNAc...) asparagine) is linked at N874.

Belongs to the ITIH family. In terms of assembly, interacts (via C-terminus) with DNAJC1 (via SANT 2 domain). May be O-glycosylated. N-glycosylated. In terms of tissue distribution, highly expressed in liver. Weak expression in lung and heart.

It is found in the secreted. Functionally, type II acute-phase protein (APP) involved in inflammatory responses to trauma. May also play a role in liver development or regeneration. The protein is Inter alpha-trypsin inhibitor, heavy chain 4 (Itih4) of Mus musculus (Mouse).